Here is a 149-residue protein sequence, read N- to C-terminus: Transcriptional repressor NrdR (149 aa).

The segment at 3–34 is a zinc-finger region; it reads CPFCSENDTKVIDSRLVADGHQVRRRRQCLAC. The 91-residue stretch at 49–139 folds into the ATP-cone domain; that stretch reads PKVIKSNGNR…VYRSFEDIRE (91 aa).

This sequence belongs to the NrdR family. Zn(2+) is required as a cofactor.

Functionally, negatively regulates transcription of bacterial ribonucleotide reductase nrd genes and operons by binding to NrdR-boxes. In Vibrio atlanticus (strain LGP32) (Vibrio splendidus (strain Mel32)), this protein is Transcriptional repressor NrdR.